The primary structure comprises 139 residues: Plasmid stability protein StbB (139 aa).

A PINc domain is found at 2 to 136 (ILLDTNVISE…EAAGLNVINP (135 aa)). The Mg(2+) site is built by Asp5 and Asp104.

The protein belongs to the PINc/VapC protein family. Mg(2+) is required as a cofactor.

Its function is as follows. Toxic component of a type II toxin-antitoxin (TA) system. An RNase. Involved in plasmid stability. This is Plasmid stability protein StbB (stbB) from Pseudomonas syringae pv. tomato (strain ATCC BAA-871 / DC3000).